The primary structure comprises 269 residues: Embryonic polyadenylate-binding protein 2 (269 aa).

Residues 26 to 54 (EAQGWGAWGRTEKTSLVPSAGSDKEAEEN) form a disordered region. An RRM domain is found at 139 to 216 (RSVYVGNVDY…RVIKVLPKRT (78 aa)). The tract at residues 240 to 269 (LQGSLQRKPRLRPHGQSRGRGRASPWFSPY) is disordered. A compositionally biased stretch (basic residues) spans 246–260 (RKPRLRPHGQSRGRG).

The protein localises to the cytoplasm. In terms of biological role, binds the poly(A) tail of mRNA. In Rattus norvegicus (Rat), this protein is Embryonic polyadenylate-binding protein 2 (Pabpn1l).